Reading from the N-terminus, the 867-residue chain is Alanine--tRNA ligase (867 aa).

Zn(2+)-binding residues include histidine 558, histidine 562, cysteine 660, and histidine 664.

Belongs to the class-II aminoacyl-tRNA synthetase family. It depends on Zn(2+) as a cofactor.

It is found in the cytoplasm. The enzyme catalyses tRNA(Ala) + L-alanine + ATP = L-alanyl-tRNA(Ala) + AMP + diphosphate. Catalyzes the attachment of alanine to tRNA(Ala) in a two-step reaction: alanine is first activated by ATP to form Ala-AMP and then transferred to the acceptor end of tRNA(Ala). Also edits incorrectly charged Ser-tRNA(Ala) and Gly-tRNA(Ala) via its editing domain. In Fervidobacterium nodosum (strain ATCC 35602 / DSM 5306 / Rt17-B1), this protein is Alanine--tRNA ligase.